Here is a 347-residue protein sequence, read N- to C-terminus: MGPMSSSTEDRRFEVLRAIVADYVATKEPIGSKTLVERHNLGVSSATVRNDMAVLEAEGYITQPHTSSGRIPTDKGYRQFVDRISEVKPLSAAERRAILQFLESGVDLDDVLRRGVRLLAQLTRQVAVVQYPTVSASTVRHIEVVALNPARLLLVVITDTGRVDQRIVELGAVVDDDDLSALRALLGAAMDGKRLAAASAAVAELPESAPQQLRDVLIRVSTVLVETLVEHPEERLVLGGTANLTRNAADFGLPGSLRQVLEALEEQVVVLKLLAAAQQPGTVTVRIGEETQVEEMRSASVVTTGYGVSGSVLGGMGVLGPTRMDYPGTIASVATVARYIGEVLAER.

It belongs to the HrcA family.

In terms of biological role, negative regulator of class I heat shock genes (grpE-dnaK-dnaJ and groELS operons). Prevents heat-shock induction of these operons. In Nocardia farcinica (strain IFM 10152), this protein is Heat-inducible transcription repressor HrcA.